A 265-amino-acid polypeptide reads, in one-letter code: Putative carbamate hydrolase RutD (265 aa).

An AB hydrolase-1 domain is found at 21 to 123 (PILLSAGMGG…TIVNGWARAD (103 aa)).

This sequence belongs to the AB hydrolase superfamily. Hydrolase RutD family.

It catalyses the reaction carbamate + 2 H(+) = NH4(+) + CO2. Involved in pyrimidine catabolism. May facilitate the hydrolysis of carbamate, a reaction that can also occur spontaneously. The chain is Putative carbamate hydrolase RutD from Azorhizobium caulinodans (strain ATCC 43989 / DSM 5975 / JCM 20966 / LMG 6465 / NBRC 14845 / NCIMB 13405 / ORS 571).